Here is a 245-residue protein sequence, read N- to C-terminus: Mannose/glucose-specific lectin (245 aa).

D87 and G107 together coordinate a carbohydrate. N-linked (GlcNAc...) asparagine glycosylation occurs at N119. Positions 129 and 131 each coordinate Mn(2+). Residues D131 and F133 each coordinate Ca(2+). A carbohydrate contacts are provided by S138 and N139. N139 and D142 together coordinate Ca(2+). Residues D142 and H147 each contribute to the Mn(2+) site. A carbohydrate is bound by residues G221, E222, and Q223.

Belongs to the leguminous lectin family. Homodimer.

Its function is as follows. Mannose/glucose-specific lectin that also binds derivatives N-acetyl-D-glucosamine and alpha-methyl-D-mannopyranoside with even higher affinity. Has hemagglutinating activity towards rabbit erythrocytes. Is toxic towards brine shrimp A.nauplii. In rats, induces dose-dependent paw edema. The polypeptide is Mannose/glucose-specific lectin (Centrolobium tomentosum (Arariba)).